We begin with the raw amino-acid sequence, 118 residues long: p-cumate 2,3-dioxygenase system, ferredoxin component (118 aa).

The 98-residue stretch at 14–111 (VGLCATDDVA…VTVEGGQIFV (98 aa)) folds into the Rieske domain. Residues cysteine 54, histidine 56, cysteine 74, and histidine 77 each contribute to the [2Fe-2S] cluster site.

The protein belongs to the bacterial ring-hydroxylating dioxygenase ferredoxin component family. The p-cumate 2,3-dioxygenase multicomponent enzyme system is composed of an electron transfer component and a dioxygenase component (iron sulfur protein (ISP)). The electron transfer component is composed of a ferredoxin reductase (CmtAa) and a ferredoxin (CmtAd), and the dioxygenase component is formed of a large alpha subunit (CmtAb) and a small beta subunit (CmtAc). The cofactor is [2Fe-2S] cluster.

It functions in the pathway aromatic compound metabolism; p-cumate degradation; acetaldehyde and pyruvate from p-cumate. Its function is as follows. Component of the p-cumate 2,3-dioxygenase multicomponent enzyme system which catalyzes the incorporation of both atoms of molecular oxygen into p-cumate to form cis-2,3-dihydroxy-2,3-dihydro-p-cumate. Functions as an intermediate electron transfer protein via a specific interaction with iron sulfur protein components (ISP)(CmtAb and CmtAc). In Pseudomonas putida (Arthrobacter siderocapsulatus), this protein is p-cumate 2,3-dioxygenase system, ferredoxin component.